We begin with the raw amino-acid sequence, 312 residues long: Olfactory receptor 1J21 (312 aa).

7 consecutive transmembrane segments (helical) span residues 29 to 49 (ALFL…ILLI), 58 to 78 (PMYF…SVTA), 95 to 115 (AGCV…NFLL), 143 to 163 (LLVM…TLLF), 197 to 217 (LVIL…ILVS), 241 to 261 (CGSH…LYFF), and 272 to 292 (VIVA…IYSL).

It belongs to the G-protein coupled receptor 1 family.

It localises to the cell membrane. In terms of biological role, odorant receptor. Activated by (+) and (-)-carvone. This Mus musculus (Mouse) protein is Olfactory receptor 1J21.